Consider the following 87-residue polypeptide: Transcriptional regulator PINT87aa (87 aa).

As to quaternary structure, interacts with PAF1 complex member PAF1. Interacts with transcription factor FOXM1. In terms of tissue distribution, expressed in brain, liver, kidney and stomach with lower levels in breast, intestine, thyroid and pancreas.

It is found in the nucleus. Its function is as follows. Enhances the binding of the PAF1 complex to target gene promoters and plays a role in negative regulation of transcription. May function as an anchor to keep the PAF1 complex on target gene promoters, sequentially pausing RNA polymerase II-induced mRNA elongation. Inhibits FOXM1-mediated transcription of PHB2. This is Transcriptional regulator PINT87aa from Homo sapiens (Human).